Here is a 377-residue protein sequence, read N- to C-terminus: Nuclear pore complex protein NUP54 (377 aa).

The span at 1–18 shows a compositional bias: low complexity; the sequence is MFGTPSSSPSFGTPSSTP. Residues 1–104 form a disordered region; it reads MFGTPSSSPS…NTAQQQQQTP (104 aa). 7 repeat units span residues 2-3, 11-12, 20-21, 27-28, 36-37, 49-50, and 87-88. The tract at residues 2–88 is 7 X 2 AA repeats of F-G; that stretch reads FGTPSSSPSF…FQQQPSSNFG (87 aa). Polar residues predominate over residues 19 to 32; sequence AFGTSSPAFGTPSA. A compositionally biased stretch (low complexity) spans 39–104; the sequence is PSNPSFSSGG…NTAQQQQQTP (66 aa).

Belongs to the NUP54 family. In terms of assembly, part of the nuclear pore complex (NPC). The NPC has an eight-fold symmetrical structure comprising a central transport channel and two rings, the cytoplasmic and nuclear rings, to which eight filaments are attached. The cytoplasmic filaments have loose ends, while the nuclear filaments are joined in a distal ring, forming a nuclear basket. NPCs are highly dynamic in configuration and composition, and can be devided in 3 subcomplexes, the NUP62 subcomplex, the NUP107-160 subcomplex and the NUP93 subcomplex, containing approximately 30 different nucleoporin proteins.

Its subcellular location is the nucleus envelope. The protein resides in the nucleus. It localises to the nuclear pore complex. The polypeptide is Nuclear pore complex protein NUP54 (Arabidopsis thaliana (Mouse-ear cress)).